Consider the following 846-residue polypeptide: Protein kintoun (846 aa).

4 disordered regions span residues 1-21 (MSTAAGSRKKHSKLHNEERAD), 377-412 (DSGVELHSNSESPVEDDADGYMPETPELETAAPPDP), 581-657 (HTSI…DSTI), and 743-846 (HDSS…DDEI). Serine 378 bears the Phosphoserine mark. Residues 399 to 408 (PETPELETAA) show a composition bias toward low complexity. Basic residues-rich tracts occupy residues 596–612 (LHKKPSKKQRKRNKKQR) and 750–766 (QRKKNQKRRNCKLRAQQ). Serine 770 bears the Phosphoserine mark. A compositionally biased stretch (basic and acidic residues) spans 821–832 (TRQDHADADAKN).

It belongs to the PIH1 family. Kintoun subfamily. Interacts with Pp1alpha-96A, Pp1-87B, Pp1-13C and flw.

Its subcellular location is the cytoplasm. Required for cytoplasmic pre-assembly of axonemal dyneins, thereby playing a central role in motility in cilia and flagella. Involved in pre-assembly of dynein arm complexes in the cytoplasm before intraflagellar transport loads them for the ciliary compartment. The chain is Protein kintoun from Drosophila pseudoobscura pseudoobscura (Fruit fly).